We begin with the raw amino-acid sequence, 381 residues long: RING-H2 finger protein ATL1 (381 aa).

The segment at 1–31 (MDLTDRRNPFNNLVFPPPPPPPSTTFTSPIF) is disordered. A helical transmembrane segment spans residues 46–66 (IAVIGILATAFLLVSYYIFVI). The segment at 134–176 (CSVCLNEFQEDEKLRIIPNCCHVFHIDCIDIWLQGNANCPLCR) adopts an RING-type; atypical zinc-finger fold. Disordered regions lie at residues 249-269 (TSNEVSTGNSPKSVSPLPIKF) and 334-354 (RQIPVAGDGEDSSSSGGGNSR). Residues 250–261 (SNEVSTGNSPKS) show a composition bias toward polar residues.

Belongs to the RING-type zinc finger family. ATL subfamily.

The protein resides in the membrane. It catalyses the reaction S-ubiquitinyl-[E2 ubiquitin-conjugating enzyme]-L-cysteine + [acceptor protein]-L-lysine = [E2 ubiquitin-conjugating enzyme]-L-cysteine + N(6)-ubiquitinyl-[acceptor protein]-L-lysine.. It participates in protein modification; protein ubiquitination. This Arabidopsis thaliana (Mouse-ear cress) protein is RING-H2 finger protein ATL1 (ATL1).